The following is an 86-amino-acid chain: Probable weak neurotoxin NNAM1 (86 aa).

Residues 1–21 form the signal peptide; it reads MKTLLLSLVVVTIVCLDLGYT. 5 cysteine pairs are disulfide-bonded: cysteine 24–cysteine 45, cysteine 27–cysteine 32, cysteine 38–cysteine 63, cysteine 67–cysteine 78, and cysteine 79–cysteine 84.

It belongs to the three-finger toxin family. Ancestral subfamily. Orphan group II sub-subfamily. As to expression, expressed by the venom gland.

It localises to the secreted. Functionally, binds with low affinity to muscular (alpha-1-beta-1-delta-epsilon/CHRNA1-CHRNB1-CHRND-CHRNE) and very low affinity to neuronal (alpha-7/CHRNA7) nicotinic acetylcholine receptor (nAChR). The sequence is that of Probable weak neurotoxin NNAM1 from Naja atra (Chinese cobra).